We begin with the raw amino-acid sequence, 164 residues long: MVNSVVFFDITVDGKPLGRISIKLFADKIPKTAENFRALSTGEKGFRYKGSCFHRIIPGFMCQGGDFTRPNGTGDKSIYGEKFDDENLIRKHTGSGILSMANAGPNTNGSQFFICTAKTEWLDGKHVAFGKVKERVNIVEAMEHFGYRNSKTSKKITIADCGQF.

The PPIase cyclophilin-type domain maps to 7-163 (FFDITVDGKP…KKITIADCGQ (157 aa)).

It belongs to the cyclophilin-type PPIase family. PPIase A subfamily.

It localises to the cytoplasm. It carries out the reaction [protein]-peptidylproline (omega=180) = [protein]-peptidylproline (omega=0). PPIases accelerate the folding of proteins. It catalyzes the cis-trans isomerization of proline imidic peptide bonds in oligopeptides. This is Peptidyl-prolyl cis-trans isomerase A-like 4C from Homo sapiens (Human).